A 548-amino-acid polypeptide reads, in one-letter code: Terpene synthase 1 (548 aa).

Residues D301, D305, D445, and E453 each contribute to the Mg(2+) site. The short motif at 301-305 (DDTYD) is the DDXXD motif element.

This sequence belongs to the terpene synthase family. Tpsa subfamily. Mg(2+) is required as a cofactor. It depends on Mn(2+) as a cofactor.

The enzyme catalyses (2E,6E)-farnesyl diphosphate = (+)-valencene + diphosphate. Its pathway is secondary metabolite biosynthesis; terpenoid biosynthesis. Its function is as follows. Sesquiterpene synthase involved in the biosynthesis of volatile compounds which contribute to fruit flavor and aroma. Mediates the conversion of (2E,6E)-farnesyl diphosphate (FPP) into (+)-valencene. No activity detected with geranyl diphosphate (GPP). In Citrus sinensis (Sweet orange), this protein is Terpene synthase 1.